We begin with the raw amino-acid sequence, 135 residues long: Phosphoribosyl-AMP cyclohydrolase (135 aa).

Aspartate 89 provides a ligand contact to Mg(2+). Cysteine 90 contributes to the Zn(2+) binding site. Residues aspartate 91 and aspartate 93 each coordinate Mg(2+). Zn(2+)-binding residues include cysteine 106 and cysteine 113.

The protein belongs to the PRA-CH family. In terms of assembly, homodimer. It depends on Mg(2+) as a cofactor. Zn(2+) is required as a cofactor.

It is found in the cytoplasm. It carries out the reaction 1-(5-phospho-beta-D-ribosyl)-5'-AMP + H2O = 1-(5-phospho-beta-D-ribosyl)-5-[(5-phospho-beta-D-ribosylamino)methylideneamino]imidazole-4-carboxamide. Its pathway is amino-acid biosynthesis; L-histidine biosynthesis; L-histidine from 5-phospho-alpha-D-ribose 1-diphosphate: step 3/9. In terms of biological role, catalyzes the hydrolysis of the adenine ring of phosphoribosyl-AMP. The sequence is that of Phosphoribosyl-AMP cyclohydrolase from Bifidobacterium adolescentis (strain ATCC 15703 / DSM 20083 / NCTC 11814 / E194a).